Here is a 702-residue protein sequence, read N- to C-terminus: Cytolytic toxin-beta (702 aa).

The tract at residues 2–264 (PSDILVVAAL…EAPQLMADSS (263 aa)) is structural MACPF/CDC pore-forming domain. N-linked (GlcNAc...) asparagine glycans are attached at residues N94, N101, and N286. The interval 265 to 387 (TPILRKVRNT…DIIEEAKHKV (123 aa)) is structural FAT domain. The interval 388-515 (VLSKSQMARE…PRIPPVETIQ (128 aa)) is thioredoxin (THX) domain. The 199-residue stretch at 504-702 (SNPRIPPVET…ANGQIKLKGE (199 aa)) folds into the B30.2/SPRY domain.

This sequence belongs to the SNTX/VTX toxin family. In terms of assembly, heterodimer of alpha and beta subunits; non-covalently linked. Also associates into tetramers or even higher aggregates. In terms of processing, intrachain disulfide bonds may be present in the heterodimer. In terms of tissue distribution, expressed by the venom gland.

It localises to the secreted. Functionally, this heterodimer induces potent hemolytic activities (when tested on rabbit erythrocytes, EC(50)=25-56 ng/mL) due to its ability to form pores in the cell membrane. The pore may be composed of 10 alpha/beta heterodimers. The toxin shows cardiovascular effects that include a vasorelaxant action that may involve the L-arginine-nitric oxid synthase pathway. In addition, it displays edema-inducing activities, increases vascular permeability. It also shows myotoxic activities and interferes irreversibly with neuromuscular function. It also induces irreversible platelet aggregation in rabbit or rat (but not in human or mouse) whole blood. In addition, it has been observed to increase spontaneous quantal acetylcholine release from isolated frog cutaneous pectoris motor endings. The chain is Cytolytic toxin-beta from Scorpaena plumieri (Spotted scorpionfish).